We begin with the raw amino-acid sequence, 432 residues long: Adenylosuccinate synthetase (432 aa).

Residues 11–17 (GDEGKGK) and 39–41 (GHT) contribute to the GTP site. The Proton acceptor role is filled by D12. The Mg(2+) site is built by D12 and G39. IMP contacts are provided by residues 12 to 15 (DEGK), 37 to 40 (NAGH), T134, R148, N230, T245, and R309. H40 functions as the Proton donor in the catalytic mechanism. Position 305 to 311 (305 to 311 (VTTGRKR)) interacts with substrate. GTP-binding positions include R311, 337–339 (KLD), and 419–421 (GTG).

It belongs to the adenylosuccinate synthetase family. In terms of assembly, homodimer. The cofactor is Mg(2+).

The protein resides in the cytoplasm. It carries out the reaction IMP + L-aspartate + GTP = N(6)-(1,2-dicarboxyethyl)-AMP + GDP + phosphate + 2 H(+). It functions in the pathway purine metabolism; AMP biosynthesis via de novo pathway; AMP from IMP: step 1/2. Plays an important role in the de novo pathway and in the salvage pathway of purine nucleotide biosynthesis. Catalyzes the first committed step in the biosynthesis of AMP from IMP. In Kluyveromyces lactis (strain ATCC 8585 / CBS 2359 / DSM 70799 / NBRC 1267 / NRRL Y-1140 / WM37) (Yeast), this protein is Adenylosuccinate synthetase.